The sequence spans 493 residues: MSLRFTNSLTSRTEAFEPLTEGKASIYCCGVTVYDLCHLGHARSYINWDVLRRYLIWRGYDVTYIQNYTDIDDKILNRANEEGITMQAVSERNIEAFEVDMGRLNILPADRMPRATGCIEGIQTLISELESKGAAYSSDGDVYFDISKAKNYGKLSGRDPDDQQQGASGRTADGEESRKRHPFDFALWKGAKAGEPSWESPWGPGRPGWHIECSAMVRQELGQTIDIHLGGGDLVFPHHENEIAQSETANGTTLAKLWMHNGMVNVGGTKMSKSLGNFTTIRALLDSGISPMTLRLFVLQAHYRKPLDFTAEALEAAATGWKGLNAALSLGGRHGESLGWSTAAPLAEGAMNADGGPADTALVELEQRFISAMDDDLNSSGGLAVLFDLAKPLRSLANRLERGEDAALPELELKGLEGRWQLLRHLAAVLGLRSEAEAAPSLDDGAIDVAIAARKAAKAAKDFAEADRIRDELAAQGVELIDKPGGVTEWIRA.

Cys-29 provides a ligand contact to Zn(2+). A 'HIGH' region motif is present at residues Val-31–His-41. The interval Lys-154 to Lys-179 is disordered. Residues Cys-213, His-238, and Glu-242 each coordinate Zn(2+). The short motif at Lys-270–Ser-274 is the 'KMSKS' region element. Lys-273 is a binding site for ATP.

Belongs to the class-I aminoacyl-tRNA synthetase family. Monomer. The cofactor is Zn(2+).

It is found in the cytoplasm. It carries out the reaction tRNA(Cys) + L-cysteine + ATP = L-cysteinyl-tRNA(Cys) + AMP + diphosphate. The polypeptide is Cysteine--tRNA ligase (Synechococcus sp. (strain CC9605)).